The sequence spans 204 residues: Pneumococcal vaccine antigen A (204 aa).

Its subcellular location is the cell surface. This is Pneumococcal vaccine antigen A (pvaA) from Streptococcus pneumoniae serotype 4 (strain ATCC BAA-334 / TIGR4).